A 169-amino-acid polypeptide reads, in one-letter code: Large ribosomal subunit protein uL23 (169 aa).

The disordered stretch occupies residues 1–20 (MAGKKVKSNTPKQDLSVSKS). Positions 8 to 20 (SNTPKQDLSVSKS) are enriched in polar residues.

It belongs to the universal ribosomal protein uL23 family.

In terms of biological role, this protein binds to a specific region on the 26S rRNA. This is Large ribosomal subunit protein uL23 (rpl23a) from Dictyostelium discoideum (Social amoeba).